Consider the following 485-residue polypeptide: Glutamate--tRNA ligase (485 aa).

The short motif at 11-21 is the 'HIGH' region element; it reads PSPTGHLHIGN. The 'KMSKS' region signature appears at 252–256; that stretch reads KLSKR. ATP is bound at residue Lys-255.

It belongs to the class-I aminoacyl-tRNA synthetase family. Glutamate--tRNA ligase type 1 subfamily. As to quaternary structure, monomer.

It is found in the cytoplasm. The catalysed reaction is tRNA(Glu) + L-glutamate + ATP = L-glutamyl-tRNA(Glu) + AMP + diphosphate. In terms of biological role, catalyzes the attachment of glutamate to tRNA(Glu) in a two-step reaction: glutamate is first activated by ATP to form Glu-AMP and then transferred to the acceptor end of tRNA(Glu). The polypeptide is Glutamate--tRNA ligase (Bacillus licheniformis (strain ATCC 14580 / DSM 13 / JCM 2505 / CCUG 7422 / NBRC 12200 / NCIMB 9375 / NCTC 10341 / NRRL NRS-1264 / Gibson 46)).